A 350-amino-acid polypeptide reads, in one-letter code: Small ribosomal subunit biogenesis GTPase RsgA (350 aa).

Over residues 1-17 (MSKNKLSKGQQRRVNAN) the composition is skewed to polar residues. Residues 1–33 (MSKNKLSKGQQRRVNANHQRRLKTSKEKPDYDD) form a disordered region. Positions 104–273 (TSVLTRPDFY…VIDSPGVREF (170 aa)) constitute a CP-type G domain. Residues 160-163 (NKID) and 214-222 (GQSGVGKSS) each bind GTP. Residues Cys297, Cys302, His304, and Cys310 each contribute to the Zn(2+) site.

It belongs to the TRAFAC class YlqF/YawG GTPase family. RsgA subfamily. Monomer. Associates with 30S ribosomal subunit, binds 16S rRNA. Requires Zn(2+) as cofactor.

It localises to the cytoplasm. One of several proteins that assist in the late maturation steps of the functional core of the 30S ribosomal subunit. Helps release RbfA from mature subunits. May play a role in the assembly of ribosomal proteins into the subunit. Circularly permuted GTPase that catalyzes slow GTP hydrolysis, GTPase activity is stimulated by the 30S ribosomal subunit. The sequence is that of Small ribosomal subunit biogenesis GTPase RsgA from Escherichia fergusonii (strain ATCC 35469 / DSM 13698 / CCUG 18766 / IAM 14443 / JCM 21226 / LMG 7866 / NBRC 102419 / NCTC 12128 / CDC 0568-73).